The chain runs to 394 residues: Lipase 3 (394 aa).

The signal sequence occupies residues 1–20; the sequence is MTRGALKVTILLVGLGLVLA. N-linked (GlcNAc...) asparagine glycosylation occurs at Asn131. Active-site charge relay system residues include Ser164 and His369.

Belongs to the AB hydrolase superfamily. Lipase family. Fat body.

This is Lipase 3 (Lip3) from Drosophila melanogaster (Fruit fly).